Consider the following 489-residue polypeptide: MTSIGQLRSQVASKERSAVEVARQYLERAERLDTEVHAFLRLTPERALAAAEAVDAKIARGEDPGLLAGVPVAVKDNLCMVGIPTTCASKILENYRPPYESTVTRRLEEQGALIIGKTNLDEFAMGSSTENSAFGPTRNPWDLGRVPGGSSGGSAAAVAACEAVASLGSDTGGSIRQPASFCGVVGLKPTYGLVSRYGLIAFASSLDQIGPFTRTVEDAALVLQAIAGHDPLDSTSLAVNVPDYRQALISDLKGVKVGFVKEFFAEGLDPDVADAVFEAIEVMRDLGAQIQEVSCPRFARGLSTYYIIATSEASANLARYDGVKYGLRDREADALVPMYGRTREEGFGSEVKRRIMLGTYALSAGYYDAYYLKAQKVRTLIKQDYLDAFAKVDVLVGPTAPTTAFAFGDKVSDPLSMYLSDIYTIPLNLAGVAGASIPCGFDAKGLPIGFQIMANALEEGKLLRAAYAYEQATEWHKRTPALAAEALTR.

Residues Lys-75 and Ser-150 each act as charge relay system in the active site. Ser-174 (acyl-ester intermediate) is an active-site residue.

Belongs to the amidase family. GatA subfamily. In terms of assembly, heterotrimer of A, B and C subunits.

The catalysed reaction is L-glutamyl-tRNA(Gln) + L-glutamine + ATP + H2O = L-glutaminyl-tRNA(Gln) + L-glutamate + ADP + phosphate + H(+). Allows the formation of correctly charged Gln-tRNA(Gln) through the transamidation of misacylated Glu-tRNA(Gln) in organisms which lack glutaminyl-tRNA synthetase. The reaction takes place in the presence of glutamine and ATP through an activated gamma-phospho-Glu-tRNA(Gln). The polypeptide is Glutamyl-tRNA(Gln) amidotransferase subunit A (Gloeobacter violaceus (strain ATCC 29082 / PCC 7421)).